We begin with the raw amino-acid sequence, 152 residues long: uncharacterized protein (152 aa).

Belongs to the antirestriction protein family.

This is an uncharacterized protein from Escherichia coli (strain K12).